The primary structure comprises 220 residues: V-set and transmembrane domain-containing protein 2-like protein (220 aa).

The first 24 residues, Met-1–Ala-24, serve as a signal peptide directing secretion. The Ig-like domain occupies Ala-41–Leu-158. Cys-62 and Cys-142 are joined by a disulfide. The segment covering Pro-165–Glu-180 has biased composition (pro residues). Positions Pro-165 to Ser-220 are disordered.

The protein is V-set and transmembrane domain-containing protein 2-like protein (Vstm2l) of Mus musculus (Mouse).